Reading from the N-terminus, the 578-residue chain is Serine/threonine-protein kinase D6PKL3 (578 aa).

Residues 1–24 (MDSSSSVVYVGSSSKSRNFQSKSK) show a composition bias toward low complexity. The segment at 1 to 64 (MDSSSSVVYV…EVIESSVSSV (64 aa)) is disordered. Positions 25–34 (GSITSFSIDS) are enriched in polar residues. Residues 53 to 64 (SPEVIESSVSSV) are compositionally biased toward low complexity. One can recognise a Protein kinase domain in the interval 182–516 (FKLIKKLGGG…ATEIKQHPFF (335 aa)). ATP-binding positions include 188–196 (LGGGDIGNV) and K211. D307 functions as the Proton acceptor in the catalytic mechanism. Residues 325–426 (DFDLSLRCAV…VGTHEYLAPE (102 aa)) are activation loop. Residues 575–578 (IDFF) carry the PIF motif.

It belongs to the protein kinase superfamily. AGC Ser/Thr protein kinase family. In terms of tissue distribution, expressed predominantly in root tissue with lower levels found in leaf, stem, seed and flower.

Its subcellular location is the cell membrane. It catalyses the reaction L-seryl-[protein] + ATP = O-phospho-L-seryl-[protein] + ADP + H(+). The catalysed reaction is L-threonyl-[protein] + ATP = O-phospho-L-threonyl-[protein] + ADP + H(+). Protein kinase that regulates the auxin transport activity of PIN auxin efflux facilitators by direct phosphorylation. D6PK-mediated PIN phosphorylation promotes auxin transport in the hypocotyl and this is a prerequisite for PHOT1-dependent hypocotyl bending. The sequence is that of Serine/threonine-protein kinase D6PKL3 (D6PKL3) from Arabidopsis thaliana (Mouse-ear cress).